The sequence spans 259 residues: Ribosomal RNA small subunit methyltransferase J (259 aa).

Residues 101–102 (RD), 117–118 (ER), 153–154 (SS), and D176 contribute to the S-adenosyl-L-methionine site.

This sequence belongs to the methyltransferase superfamily. RsmJ family.

The protein localises to the cytoplasm. It catalyses the reaction guanosine(1516) in 16S rRNA + S-adenosyl-L-methionine = N(2)-methylguanosine(1516) in 16S rRNA + S-adenosyl-L-homocysteine + H(+). In terms of biological role, specifically methylates the guanosine in position 1516 of 16S rRNA. The chain is Ribosomal RNA small subunit methyltransferase J from Vibrio parahaemolyticus serotype O3:K6 (strain RIMD 2210633).